We begin with the raw amino-acid sequence, 146 residues long: uncharacterized protein (146 aa).

Residues 1–137 (MLSQEFFNSF…TINVMNQIHK (137 aa)) form the HTH marR-type domain.

This is an uncharacterized protein from Staphylococcus aureus (strain MW2).